Reading from the N-terminus, the 340-residue chain is tRNA N6-adenosine threonylcarbamoyltransferase (340 aa).

Fe cation contacts are provided by histidine 109 and histidine 113. Residues 132–136 (AISGA), aspartate 165, glycine 178, and asparagine 277 each bind substrate. Residue aspartate 302 participates in Fe cation binding.

This sequence belongs to the KAE1 / TsaD family. The cofactor is Fe(2+).

The protein resides in the cytoplasm. It carries out the reaction L-threonylcarbamoyladenylate + adenosine(37) in tRNA = N(6)-L-threonylcarbamoyladenosine(37) in tRNA + AMP + H(+). In terms of biological role, required for the formation of a threonylcarbamoyl group on adenosine at position 37 (t(6)A37) in tRNAs that read codons beginning with adenine. Is involved in the transfer of the threonylcarbamoyl moiety of threonylcarbamoyl-AMP (TC-AMP) to the N6 group of A37, together with TsaE and TsaB. TsaD likely plays a direct catalytic role in this reaction. This is tRNA N6-adenosine threonylcarbamoyltransferase from Chlamydia muridarum (strain MoPn / Nigg).